Consider the following 72-residue polypeptide: MAFLKKSLFLVLFLGLVSLSICEKEKRQNEEDEDENEAANHEEGSEEKRGLFDIVKKVVGALGSLGKRNDLE.

An N-terminal signal peptide occupies residues 1-22; sequence MAFLKKSLFLVLFLGLVSLSIC. A propeptide spanning residues 23-49 is cleaved from the precursor; sequence EKEKRQNEEDEDENEAANHEEGSEEKR. The tract at residues 27–47 is disordered; that stretch reads RQNEEDEDENEAANHEEGSEE. The segment covering 38–47 has biased composition (basic and acidic residues); it reads AANHEEGSEE. Leu65 is modified (leucine amide). A propeptide spanning residues 69–72 is cleaved from the precursor; it reads NDLE.

Post-translationally, amidation is essential for antibacterial activity against Gram-positive bacteria. Expressed by the skin dorsal glands.

It is found in the secreted. The protein resides in the target cell membrane. In terms of biological role, amphipathic alpha-helical antimicrobial peptide with weak to moderate activity against Gram-positive bacteria, and no activity against Gram-negative bacteria. Probably acts by disturbing membrane functions with its amphipathic structure. Strongly inhibits the formation of NO by neuronal nitric oxide synthase (nNOS) at micromolar concentrations. Acts by a non-competitive mechanism, probably by binding to calcium/calmodulin and as a consequence blocking calmodulin attachment to nNOS. This Ranoidea aurea (Green and golden bell frog) protein is Aurein-2.2.